We begin with the raw amino-acid sequence, 255 residues long: Malonyl-[acyl-carrier protein] O-methyltransferase (255 aa).

Belongs to the methyltransferase superfamily.

It carries out the reaction malonyl-[ACP] + S-adenosyl-L-methionine = malonyl-[ACP] methyl ester + S-adenosyl-L-homocysteine. It functions in the pathway cofactor biosynthesis; biotin biosynthesis. Converts the free carboxyl group of a malonyl-thioester to its methyl ester by transfer of a methyl group from S-adenosyl-L-methionine (SAM). It allows to synthesize pimeloyl-ACP via the fatty acid synthetic pathway. The protein is Malonyl-[acyl-carrier protein] O-methyltransferase of Serratia marcescens.